A 395-amino-acid polypeptide reads, in one-letter code: uncharacterized protein (395 aa).

The protein belongs to the UDP-glycosyltransferase family.

This is an uncharacterized protein from Bacillus subtilis (strain 168).